Reading from the N-terminus, the 245-residue chain is tRNA pseudouridine synthase A (245 aa).

Asp52 acts as the Nucleophile in catalysis. Position 110 (Tyr110) interacts with substrate.

It belongs to the tRNA pseudouridine synthase TruA family. As to quaternary structure, homodimer.

It catalyses the reaction uridine(38/39/40) in tRNA = pseudouridine(38/39/40) in tRNA. Functionally, formation of pseudouridine at positions 38, 39 and 40 in the anticodon stem and loop of transfer RNAs. The chain is tRNA pseudouridine synthase A from Borrelia duttonii (strain Ly).